Here is a 257-residue protein sequence, read N- to C-terminus: 1-(5-phosphoribosyl)-5-[(5-phosphoribosylamino)methylideneamino] imidazole-4-carboxamide isomerase (257 aa).

The active-site Proton acceptor is Asp8. Asp129 acts as the Proton donor in catalysis.

The protein belongs to the HisA/HisF family.

It is found in the cytoplasm. It carries out the reaction 1-(5-phospho-beta-D-ribosyl)-5-[(5-phospho-beta-D-ribosylamino)methylideneamino]imidazole-4-carboxamide = 5-[(5-phospho-1-deoxy-D-ribulos-1-ylimino)methylamino]-1-(5-phospho-beta-D-ribosyl)imidazole-4-carboxamide. It functions in the pathway amino-acid biosynthesis; L-histidine biosynthesis; L-histidine from 5-phospho-alpha-D-ribose 1-diphosphate: step 4/9. The protein is 1-(5-phosphoribosyl)-5-[(5-phosphoribosylamino)methylideneamino] imidazole-4-carboxamide isomerase of Trichodesmium erythraeum (strain IMS101).